A 365-amino-acid polypeptide reads, in one-letter code: Chorismate synthase (365 aa).

Arg-47 is a binding site for NADP(+). Residues Arg-124–Ser-126, Gly-287, Lys-302–Thr-306, and Arg-328 contribute to the FMN site.

This sequence belongs to the chorismate synthase family. In terms of assembly, homotetramer. It depends on FMNH2 as a cofactor.

The catalysed reaction is 5-O-(1-carboxyvinyl)-3-phosphoshikimate = chorismate + phosphate. Its pathway is metabolic intermediate biosynthesis; chorismate biosynthesis; chorismate from D-erythrose 4-phosphate and phosphoenolpyruvate: step 7/7. Its function is as follows. Catalyzes the anti-1,4-elimination of the C-3 phosphate and the C-6 proR hydrogen from 5-enolpyruvylshikimate-3-phosphate (EPSP) to yield chorismate, which is the branch point compound that serves as the starting substrate for the three terminal pathways of aromatic amino acid biosynthesis. This reaction introduces a second double bond into the aromatic ring system. This Prochlorococcus marinus (strain MIT 9312) protein is Chorismate synthase.